A 259-amino-acid chain; its full sequence is Cobalt transport protein CbiM (259 aa).

An N-terminal signal peptide occupies residues 1-25; the sequence is MFRRTTWLTLYLLLAMAALARPAFA. 6 helical membrane passes run 31-51, 68-88, 100-120, 132-152, 160-180, and 206-226; these read GFLP…FWIW, MLLG…LPSV, LGAV…VLLF, TLGA…YGLY, GSMP…TYVT, and IFAV…VIVF.

The protein belongs to the CbiM family. In terms of assembly, forms an energy-coupling factor (ECF) transporter complex composed of an ATP-binding protein (A component, CbiO), a transmembrane protein (T component, CbiQ) and 2 possible substrate-capture proteins (S components, CbiM and CbiN) of unknown stoichimetry.

The protein resides in the cell membrane. It participates in cofactor biosynthesis; adenosylcobalamin biosynthesis. Part of the energy-coupling factor (ECF) transporter complex CbiMNOQ involved in cobalt import. The polypeptide is Cobalt transport protein CbiM (Moorella thermoacetica (strain ATCC 39073 / JCM 9320)).